The chain runs to 181 residues: MDIQTEMTAPPLSGGLDPAQARDAADAVRNAIYRATILLDSQKWDEWLALCADNFVYDIKAWSPEINYDMTYLHGSRKDLEALIRLLPKHNTDHSPLTRHTTIYTVDVADEGATAKGVSAFIVFQHLLDGTNSHIDAGESRLFLVGKYYDTFRIENGQALFTSRETRLENRRLDKGSHWPI.

It belongs to the bacterial ring-hydroxylating dioxygenase beta subunit family. As to quaternary structure, the MSA monooxygenase system consists of 4 proteins: the 2 subunits of the hydroxylase component (MsmA and MsmB), a ferredoxin (MsmC) and a ferredoxin reductase (MsmD). The hydroxylase component consists of a 3 alpha (MsmA) and 3 beta (MsmB) subunits.

It is found in the cytoplasm. The catalysed reaction is methanesulfonate + NADH + O2 = sulfite + formaldehyde + NAD(+) + H2O. Its activity is regulated as follows. MSAMO is inhibited by metal chelators (such as bathophenanthroline, bathocuprione, neocuprione, alpha-alpha-dipyridil and sodium EDTA) and by sodium azide, sodium arsenate and potassium cyanide. Its function is as follows. Methanesulfonate monooxygenase (MSAMO) mediates the primary degradation of methanesulfonic acid (MSA) to produce formaldehyd and inorganic sulfite by initial hydroxylation of the carbon atom prior to spontaneous cleavage of the unstable hydroxymethanesulfonic acid. MSAMO has a restricted substrate range that includes only the short-chain aliphatic sulfonates (methane- to butanesulfonate) and excludes all larger molecules, such as arylsulfonates and aromatic sulfonates. All MSAMO components are required for enzyme activity. The chain is Methanesulfonate monooxygenase hydroxylase subunit beta from Methylosulfonomonas methylovora.